A 399-amino-acid chain; its full sequence is 1-deoxy-D-xylulose 5-phosphate reductoisomerase (399 aa).

Positions 13, 14, 15, 16, and 127 each coordinate NADPH. Lysine 128 provides a ligand contact to 1-deoxy-D-xylulose 5-phosphate. An NADPH-binding site is contributed by glutamate 129. Aspartate 153 contributes to the Mn(2+) binding site. 4 residues coordinate 1-deoxy-D-xylulose 5-phosphate: serine 154, glutamate 155, serine 187, and histidine 210. Residue glutamate 155 coordinates Mn(2+). NADPH is bound at residue glycine 216. 1-deoxy-D-xylulose 5-phosphate-binding residues include serine 223, asparagine 228, lysine 229, and glutamate 232. Mn(2+) is bound at residue glutamate 232.

It belongs to the DXR family. It depends on Mg(2+) as a cofactor. Mn(2+) is required as a cofactor.

It carries out the reaction 2-C-methyl-D-erythritol 4-phosphate + NADP(+) = 1-deoxy-D-xylulose 5-phosphate + NADPH + H(+). The protein operates within isoprenoid biosynthesis; isopentenyl diphosphate biosynthesis via DXP pathway; isopentenyl diphosphate from 1-deoxy-D-xylulose 5-phosphate: step 1/6. Catalyzes the NADPH-dependent rearrangement and reduction of 1-deoxy-D-xylulose-5-phosphate (DXP) to 2-C-methyl-D-erythritol 4-phosphate (MEP). This Bordetella avium (strain 197N) protein is 1-deoxy-D-xylulose 5-phosphate reductoisomerase.